The chain runs to 271 residues: 4-hydroxy-tetrahydrodipicolinate reductase (271 aa).

NAD(+)-binding positions include 11–16 (GGSGRM) and Glu-37. Residue Arg-38 coordinates NADP(+). Residues 101 to 103 (GTT) and 125 to 128 (APNM) contribute to the NAD(+) site. His-158 acts as the Proton donor/acceptor in catalysis. Residue His-159 participates in (S)-2,3,4,5-tetrahydrodipicolinate binding. The active-site Proton donor is Lys-162. 168–169 (GT) contacts (S)-2,3,4,5-tetrahydrodipicolinate.

It belongs to the DapB family.

It is found in the cytoplasm. The enzyme catalyses (S)-2,3,4,5-tetrahydrodipicolinate + NAD(+) + H2O = (2S,4S)-4-hydroxy-2,3,4,5-tetrahydrodipicolinate + NADH + H(+). It catalyses the reaction (S)-2,3,4,5-tetrahydrodipicolinate + NADP(+) + H2O = (2S,4S)-4-hydroxy-2,3,4,5-tetrahydrodipicolinate + NADPH + H(+). The protein operates within amino-acid biosynthesis; L-lysine biosynthesis via DAP pathway; (S)-tetrahydrodipicolinate from L-aspartate: step 4/4. Functionally, catalyzes the conversion of 4-hydroxy-tetrahydrodipicolinate (HTPA) to tetrahydrodipicolinate. The protein is 4-hydroxy-tetrahydrodipicolinate reductase of Shewanella loihica (strain ATCC BAA-1088 / PV-4).